We begin with the raw amino-acid sequence, 282 residues long: Elongation factor Ts (282 aa).

The tract at residues 80–83 (TDFV) is involved in Mg(2+) ion dislocation from EF-Tu.

It belongs to the EF-Ts family.

The protein resides in the cytoplasm. Associates with the EF-Tu.GDP complex and induces the exchange of GDP to GTP. It remains bound to the aminoacyl-tRNA.EF-Tu.GTP complex up to the GTP hydrolysis stage on the ribosome. The sequence is that of Elongation factor Ts from Chlamydia felis (strain Fe/C-56) (Chlamydophila felis).